A 119-amino-acid chain; its full sequence is Putative F420H(2)-dependent quinone reductase Rv3178 (119 aa).

Coenzyme F420-(gamma-Glu)n-binding positions include 21–23 (RKS), 27–32 (FVAPLL), 43–46 (VASA), and 54–58 (QWYRN).

It belongs to the F420H(2)-dependent quinone reductase family.

It localises to the cell membrane. It carries out the reaction oxidized coenzyme F420-(gamma-L-Glu)(n) + a quinol + H(+) = reduced coenzyme F420-(gamma-L-Glu)(n) + a quinone. Its function is as follows. Involved in a F420-dependent anti-oxidant mechanism that protects M.tuberculosis against oxidative stress and bactericidal agents. Catalyzes the F420H(2)-dependent two-electron reduction of quinones to dihydroquinones, thereby preventing the formation of cytotoxic semiquinones obtained by the one-electron reduction pathway. Since menaquinone is the sole quinone electron carrier in the respiratory chain in M.tuberculosis, the physiological electron acceptor for Fqr-mediated F420H(2) oxidation is therefore likely to be the endogenous menaquinone found in the membrane fraction of M.tuberculosis. The sequence is that of Putative F420H(2)-dependent quinone reductase Rv3178 from Mycobacterium tuberculosis (strain ATCC 25618 / H37Rv).